The primary structure comprises 55 residues: Conotoxin Cal22b (55 aa).

Residues 1 to 5 (GRPSA) constitute a propeptide that is removed on maturation.

Contains 4 disulfide bonds. As to expression, expressed by the venom duct.

It is found in the secreted. Its function is as follows. Probable neurotoxin with unknown target. Possibly targets ion channels. In Californiconus californicus (California cone), this protein is Conotoxin Cal22b.